The following is a 471-amino-acid chain: Alpha-galactosidase 2 (471 aa).

An N-terminal signal peptide occupies residues 1–18; that stretch reads MFAFYFLTACISLKGVFG. Cysteine 42 and cysteine 74 are joined by a disulfide. Residues aspartate 72 and aspartate 73 each contribute to the substrate site. Residue asparagine 105 is glycosylated (N-linked (GlcNAc...) asparagine). Cysteine 121 and cysteine 151 form a disulfide bridge. Position 147 (lysine 147) interacts with substrate. The Nucleophile role is filled by aspartate 149. N-linked (GlcNAc...) asparagine glycosylation is present at asparagine 175. Arginine 205 is a binding site for substrate. The active-site Proton donor is the aspartate 209. 2 disulfide bridges follow: cysteine 221–cysteine 237 and cysteine 223–cysteine 230. Glutamine 251 provides a ligand contact to substrate. N-linked (GlcNAc...) asparagine glycans are attached at residues asparagine 270, asparagine 370, asparagine 403, asparagine 413, asparagine 422, asparagine 435, and asparagine 454.

The protein belongs to the glycosyl hydrolase 27 family. As to quaternary structure, homotetramer.

It localises to the secreted. The catalysed reaction is Hydrolysis of terminal, non-reducing alpha-D-galactose residues in alpha-D-galactosides, including galactose oligosaccharides, galactomannans and galactolipids.. The polypeptide is Alpha-galactosidase 2 (MEL2) (Saccharomyces cerevisiae (Baker's yeast)).